A 529-amino-acid chain; its full sequence is Peptide chain release factor 3 (529 aa).

Positions 11 to 280 (NSRRTFAIIS…AFINWAPEPK (270 aa)) constitute a tr-type G domain. GTP contacts are provided by residues 20 to 27 (SHPDAGKT), 88 to 92 (DTPGH), and 142 to 145 (NKMD).

The protein belongs to the TRAFAC class translation factor GTPase superfamily. Classic translation factor GTPase family. PrfC subfamily.

The protein resides in the cytoplasm. Functionally, increases the formation of ribosomal termination complexes and stimulates activities of RF-1 and RF-2. It binds guanine nucleotides and has strong preference for UGA stop codons. It may interact directly with the ribosome. The stimulation of RF-1 and RF-2 is significantly reduced by GTP and GDP, but not by GMP. The chain is Peptide chain release factor 3 from Acinetobacter baylyi (strain ATCC 33305 / BD413 / ADP1).